The chain runs to 125 residues: Unclassified hydrophobin 8 (125 aa).

Residues 1 to 20 (MMFSKPVVLATTALATFAAA) form the signal peptide. 4 disulfide bridges follow: Cys31–Cys105, Cys38–Cys99, Cys39–Cys90, and Cys106–Cys119.

Belongs to the fungal hydrophobin family. As to quaternary structure, self-assembles to form functional amyloid fibrils called rodlets. Self-assembly into fibrillar rodlets occurs spontaneously at hydrophobic:hydrophilic interfaces and the rodlets further associate laterally to form amphipathic monolayers.

The protein resides in the secreted. The protein localises to the cell wall. Functionally, aerial growth, conidiation, and dispersal of filamentous fungi in the environment rely upon a capability of their secreting small amphipathic proteins called hydrophobins (HPBs) with low sequence identity. Class I can self-assemble into an outermost layer of rodlet bundles on aerial cell surfaces, conferring cellular hydrophobicity that supports fungal growth, development and dispersal; whereas Class II form highly ordered films at water-air interfaces through intermolecular interactions but contribute nothing to the rodlet structure. Hydph8 is an unclassified hydrophobin involved in mycelial growth. The chain is Unclassified hydrophobin 8 from Pleurotus ostreatus (strain PC15) (Oyster mushroom).